A 227-amino-acid chain; its full sequence is NAD(P)H-quinone oxidoreductase subunit K, chloroplastic (227 aa).

4 residues coordinate [4Fe-4S] cluster: C43, C44, C108, and C139.

It belongs to the complex I 20 kDa subunit family. As to quaternary structure, NDH is composed of at least 16 different subunits, 5 of which are encoded in the nucleus. Requires [4Fe-4S] cluster as cofactor.

Its subcellular location is the plastid. It is found in the chloroplast thylakoid membrane. It carries out the reaction a plastoquinone + NADH + (n+1) H(+)(in) = a plastoquinol + NAD(+) + n H(+)(out). It catalyses the reaction a plastoquinone + NADPH + (n+1) H(+)(in) = a plastoquinol + NADP(+) + n H(+)(out). Functionally, NDH shuttles electrons from NAD(P)H:plastoquinone, via FMN and iron-sulfur (Fe-S) centers, to quinones in the photosynthetic chain and possibly in a chloroplast respiratory chain. The immediate electron acceptor for the enzyme in this species is believed to be plastoquinone. Couples the redox reaction to proton translocation, and thus conserves the redox energy in a proton gradient. This chain is NAD(P)H-quinone oxidoreductase subunit K, chloroplastic, found in Pelargonium hortorum (Common geranium).